A 357-amino-acid chain; its full sequence is DNA primase small subunit PriS (357 aa).

Catalysis depends on residues D105, D107, and D259.

It belongs to the eukaryotic-type primase small subunit family. As to quaternary structure, heterodimer of a small subunit (PriS) and a large subunit (PriL). The cofactor is Mg(2+). It depends on Mn(2+) as a cofactor.

Functionally, catalytic subunit of DNA primase, an RNA polymerase that catalyzes the synthesis of short RNA molecules used as primers for DNA polymerase during DNA replication. The small subunit contains the primase catalytic core and has DNA synthesis activity on its own. Binding to the large subunit stabilizes and modulates the activity, increasing the rate of DNA synthesis while decreasing the length of the DNA fragments, and conferring RNA synthesis capability. The DNA polymerase activity may enable DNA primase to also catalyze primer extension after primer synthesis. May also play a role in DNA repair. This Methanococcus maripaludis (strain DSM 14266 / JCM 13030 / NBRC 101832 / S2 / LL) protein is DNA primase small subunit PriS.